The chain runs to 365 residues: Probable cinnamyl alcohol dehydrogenase (365 aa).

Cysteine 47 contributes to the Zn(2+) binding site. Position 49 (threonine 49) interacts with NADP(+). Zn(2+) contacts are provided by histidine 69, glutamate 70, cysteine 100, cysteine 103, cysteine 106, cysteine 114, and cysteine 163. NADP(+) contacts are provided by residues threonine 167, 188–193 (GLGGVG), 211–216 (SSSSKK), threonine 251, glycine 275, and 298–300 (SFI).

It belongs to the zinc-containing alcohol dehydrogenase family. As to quaternary structure, homodimer. Requires Zn(2+) as cofactor.

The catalysed reaction is (E)-cinnamyl alcohol + NADP(+) = (E)-cinnamaldehyde + NADPH + H(+). It catalyses the reaction (E)-coniferol + NADP(+) = (E)-coniferaldehyde + NADPH + H(+). The enzyme catalyses (E)-sinapyl alcohol + NADP(+) = (E)-sinapaldehyde + NADPH + H(+). It carries out the reaction (E)-4-coumaroyl alcohol + NADP(+) = (E)-4-coumaraldehyde + NADPH + H(+). The catalysed reaction is (E)-caffeyl alcohol + NADP(+) = (E)-caffeyl aldehyde + NADPH + H(+). Its pathway is aromatic compound metabolism; phenylpropanoid biosynthesis. Functionally, involved in lignin biosynthesis. Catalyzes the final step specific for the production of lignin monomers. Catalyzes the NADPH-dependent reduction of coniferaldehyde, 5-hydroxyconiferaldehyde, sinapaldehyde, 4-coumaraldehyde and caffeyl aldehyde to their respective alcohols. The polypeptide is Probable cinnamyl alcohol dehydrogenase (CAD) (Saccharum officinarum (Sugarcane)).